We begin with the raw amino-acid sequence, 54 residues long: UPF0391 membrane protein Pmen_0080 (54 aa).

2 helical membrane-spanning segments follow: residues 4-24 (WALT…GGIA) and 28-48 (AGIA…SFIM).

Belongs to the UPF0391 family.

The protein localises to the cell membrane. The chain is UPF0391 membrane protein Pmen_0080 from Ectopseudomonas mendocina (strain ymp) (Pseudomonas mendocina).